The following is a 98-amino-acid chain: NADH-ubiquinone oxidoreductase chain 4L (98 aa).

3 helical membrane passes run 1–21 (MSLI…GLLM), 29–49 (ALLC…LTIL), and 61–81 (IILL…LVMI).

It belongs to the complex I subunit 4L family. In terms of assembly, core subunit of respiratory chain NADH dehydrogenase (Complex I) which is composed of 45 different subunits.

The protein localises to the mitochondrion inner membrane. It carries out the reaction a ubiquinone + NADH + 5 H(+)(in) = a ubiquinol + NAD(+) + 4 H(+)(out). In terms of biological role, core subunit of the mitochondrial membrane respiratory chain NADH dehydrogenase (Complex I) which catalyzes electron transfer from NADH through the respiratory chain, using ubiquinone as an electron acceptor. Part of the enzyme membrane arm which is embedded in the lipid bilayer and involved in proton translocation. In Platanista minor (Indus river dolphin), this protein is NADH-ubiquinone oxidoreductase chain 4L (MT-ND4L).